The following is a 221-amino-acid chain: Transcription antitermination protein NusB (221 aa).

Belongs to the NusB family.

In terms of biological role, involved in transcription antitermination. Required for transcription of ribosomal RNA (rRNA) genes. Binds specifically to the boxA antiterminator sequence of the ribosomal RNA (rrn) operons. The sequence is that of Transcription antitermination protein NusB from Synechocystis sp. (strain ATCC 27184 / PCC 6803 / Kazusa).